We begin with the raw amino-acid sequence, 710 residues long: Dendrin (710 aa).

Disordered stretches follow at residues 1–22, 62–195, 213–274, and 324–375; these read MLDGPLFSEGPDSPRELQDEES, WARG…PWGG, AGTA…KRLD, and GLNS…GKEG. Positions 103 to 134 form a coiled coil; sequence AEVRAREQEKRKAASQEREAKETERKRRKAGG. Residues 105 to 127 show a composition bias toward basic and acidic residues; sequence VRAREQEKRKAASQEREAKETER. Residues 113 to 131 are nuclear localization; that stretch reads RKAASQEREAKETERKRRK. The tract at residues 186-236 is interaction with MAGI2; that stretch reads GVAWAGPWGGRRPGPPSYEAHLLLRGSAGTAPRRRWDRPPPYVAPPSYEGP. Over residues 265–274 the composition is skewed to basic and acidic residues; sequence EGGRTKKRLD. Residues 341–435 are interaction with ACTN1; that stretch reads PGTDAALSRS…LEVWKVTRRA (95 aa). Positions 360 to 370 are enriched in basic residues; the sequence is PRSRQHLRGSR. Serine 388 is subject to Phosphoserine. 3 disordered regions span residues 390 to 422, 469 to 508, and 521 to 710; these read KKPPVRHSQTLPRPWAPGGTGWKESLGQREGAE, PRTQQGQLVPSGESCSVSDSLSQPKPCHEEEGEGAAANPS, and NQPS…RERE. Positions 407 to 708 are interaction with CD2AP and NPHS1; that stretch reads GGTGWKESLG…TRKTPQGNRE (302 aa). Positions 469-491 are enriched in polar residues; that stretch reads PRTQQGQLVPSGESCSVSDSLSQ. Positions 693–710 are enriched in basic and acidic residues; it reads GFIREDTRKTPQGNRERE.

As to quaternary structure, forms a ternary complex with MAGI2 and SH3KBP1; recruits DDN to the cytoplasm. Interacts with MAGI1. Interacts with ACTN1 and may interact with WWC1. Interacts with the podocyte slit diaphragm proteins CD2AP, NPHS1 and NPHS2; the interaction with CD2AP and NPHS1 is direct. In terms of tissue distribution, two forms of 81 kDa and 89 kDa are expressed in brain. The 81 kDa form is the only one found in kidney podocytes.

It is found in the cell projection. The protein localises to the dendritic spine membrane. Its subcellular location is the cytoplasm. The protein resides in the endoplasmic reticulum membrane. It localises to the perikaryon. It is found in the nucleus. Its function is as follows. Promotes apoptosis of kidney glomerular podocytes. Podocytes are highly specialized cells essential to the ultrafiltration of blood, resulting in the extraction of urine and the retention of protein. This Mus musculus (Mouse) protein is Dendrin (Ddn).